A 165-amino-acid chain; its full sequence is NADPH-dependent 7-cyano-7-deazaguanine reductase (165 aa).

The Thioimide intermediate role is filled by Cys-56. Asp-63 functions as the Proton donor in the catalytic mechanism. Substrate contacts are provided by residues 78–80 (VES) and 97–98 (HE).

Belongs to the GTP cyclohydrolase I family. QueF type 1 subfamily.

The protein resides in the cytoplasm. The catalysed reaction is 7-aminomethyl-7-carbaguanine + 2 NADP(+) = 7-cyano-7-deazaguanine + 2 NADPH + 3 H(+). Its pathway is tRNA modification; tRNA-queuosine biosynthesis. With respect to regulation, is totally inhibited by 4-aminobenzylcyanide in vitro. Catalyzes the NADPH-dependent reduction of 7-cyano-7-deazaguanine (preQ0) to 7-aminomethyl-7-deazaguanine (preQ1), a late step in the queuosine pathway. Is highly specific for its natural substrate preQ0, since it cannot use various aliphatic, aromatic and heterocyclic nitriles, although it can reduce the substrate analog 5-cyanopyrrolo[2,3-d]pyrimidin-4-one with lesser efficiency. This chain is NADPH-dependent 7-cyano-7-deazaguanine reductase, found in Geobacillus kaustophilus (strain HTA426).